The primary structure comprises 350 residues: UDP-N-acetylenolpyruvoylglucosamine reductase (350 aa).

An FAD-binding PCMH-type domain is found at 24 to 195 (HVDATARWLL…VAVEFNLPLL (172 aa)). Arginine 172 is an active-site residue. Serine 245 functions as the Proton donor in the catalytic mechanism. Residue glutamate 342 is part of the active site.

This sequence belongs to the MurB family. Requires FAD as cofactor.

It localises to the cytoplasm. It catalyses the reaction UDP-N-acetyl-alpha-D-muramate + NADP(+) = UDP-N-acetyl-3-O-(1-carboxyvinyl)-alpha-D-glucosamine + NADPH + H(+). It participates in cell wall biogenesis; peptidoglycan biosynthesis. Cell wall formation. In Xanthomonas campestris pv. campestris (strain B100), this protein is UDP-N-acetylenolpyruvoylglucosamine reductase.